The primary structure comprises 280 residues: 2-dehydro-3-deoxyphosphooctonate aldolase (280 aa).

Belongs to the KdsA family.

The protein localises to the cytoplasm. It carries out the reaction D-arabinose 5-phosphate + phosphoenolpyruvate + H2O = 3-deoxy-alpha-D-manno-2-octulosonate-8-phosphate + phosphate. It participates in carbohydrate biosynthesis; 3-deoxy-D-manno-octulosonate biosynthesis; 3-deoxy-D-manno-octulosonate from D-ribulose 5-phosphate: step 2/3. It functions in the pathway bacterial outer membrane biogenesis; lipopolysaccharide biosynthesis. This chain is 2-dehydro-3-deoxyphosphooctonate aldolase, found in Coxiella burnetii (strain CbuG_Q212) (Coxiella burnetii (strain Q212)).